The sequence spans 787 residues: Penicillin-binding protein 1A (787 aa).

Residues 1–6 (MYKSLF) lie on the Cytoplasmic side of the membrane. The helical; Signal-anchor for type II membrane protein transmembrane segment at 7 to 27 (LCLKIFAVLILIGCSVTAYII) threads the bilayer. At 28–787 (YHYSHDLPDY…GMLDQSQEIY (760 aa)) the chain is on the periplasmic side. A transglycosylase region spans residues 49-220 (TRIYSRDGKL…SELNPDKNYS (172 aa)). Glu-87 (proton donor; for transglycosylase activity) is an active-site residue. Positions 398–711 (DVIVVEPIKD…SNVVLPIFID (314 aa)) are transpeptidase. Residue Ser-457 is the Acyl-ester intermediate; for transpeptidase activity of the active site.

It in the N-terminal section; belongs to the glycosyltransferase 51 family. The protein in the C-terminal section; belongs to the transpeptidase family.

It localises to the cell inner membrane. The catalysed reaction is [GlcNAc-(1-&gt;4)-Mur2Ac(oyl-L-Ala-gamma-D-Glu-L-Lys-D-Ala-D-Ala)](n)-di-trans,octa-cis-undecaprenyl diphosphate + beta-D-GlcNAc-(1-&gt;4)-Mur2Ac(oyl-L-Ala-gamma-D-Glu-L-Lys-D-Ala-D-Ala)-di-trans,octa-cis-undecaprenyl diphosphate = [GlcNAc-(1-&gt;4)-Mur2Ac(oyl-L-Ala-gamma-D-Glu-L-Lys-D-Ala-D-Ala)](n+1)-di-trans,octa-cis-undecaprenyl diphosphate + di-trans,octa-cis-undecaprenyl diphosphate + H(+). It carries out the reaction Preferential cleavage: (Ac)2-L-Lys-D-Ala-|-D-Ala. Also transpeptidation of peptidyl-alanyl moieties that are N-acyl substituents of D-alanine.. The protein operates within cell wall biogenesis; peptidoglycan biosynthesis. Cell wall formation. Synthesis of cross-linked peptidoglycan from the lipid intermediates. The enzyme has a penicillin-insensitive transglycosylase N-terminal domain (formation of linear glycan strands) and a penicillin-sensitive transpeptidase C-terminal domain (cross-linking of the peptide subunits). This Rickettsia prowazekii (strain Madrid E) protein is Penicillin-binding protein 1A (mrcA).